A 96-amino-acid chain; its full sequence is Methanol dehydrogenase [cytochrome c] subunit 2 (96 aa).

The N-terminal stretch at 1–22 is a signal peptide; sequence MKTTLIAAAIVALSGLAAPALA. Cysteines 28 and 34 form a disulfide. The disordered stretch occupies residues 45–75; sequence IAGSKYDPKHDPKELNKQADSIKQMEERNKK. Residues 50–61 are compositionally biased toward basic and acidic residues; sequence YDPKHDPKELNK.

The protein belongs to the methanol dehydrogenase subunit 2 family. Heterotetramer composed of 2 alpha and 2 beta subunits.

It is found in the periplasm. It catalyses the reaction 2 Fe(III)-[cytochrome cL] + a primary alcohol = 2 Fe(II)-[cytochrome cL] + an aldehyde + 2 H(+). In terms of biological role, catalyzes the oxidation of primary alcohols including methanol. In Methylorubrum extorquens (strain ATCC 14718 / DSM 1338 / JCM 2805 / NCIMB 9133 / AM1) (Methylobacterium extorquens), this protein is Methanol dehydrogenase [cytochrome c] subunit 2 (moxI).